A 215-amino-acid polypeptide reads, in one-letter code: WAT1-related protein At3g28060 (215 aa).

5 consecutive transmembrane segments (helical) span residues 48 to 68 (IIIG…AVAY), 82 to 102 (FALA…VSLF), 117 to 137 (IMLI…VVES), 146 to 166 (VFLA…GAIF), and 176 to 196 (VIGG…FHIA). Residues 65–186 (AVAYIVQTHI…IGGTLISIGF (122 aa)) form the EamA domain.

The protein belongs to the drug/metabolite transporter (DMT) superfamily. Plant drug/metabolite exporter (P-DME) (TC 2.A.7.4) family.

The protein localises to the membrane. This Arabidopsis thaliana (Mouse-ear cress) protein is WAT1-related protein At3g28060.